The primary structure comprises 468 residues: Homocitrate synthase (468 aa).

A Pyruvate carboxyltransferase domain is found at 11 to 266; the sequence is VGILDSTLRE…IEVVDLKKLS (256 aa). Arg-19 contacts 2-oxoglutarate. Glu-20 serves as a coordination point for Mg(2+). 2-oxoglutarate is bound by residues His-83, Arg-143, and Thr-177. 2 residues coordinate Mg(2+): His-205 and His-207. His-299 acts as the Proton acceptor in catalysis.

It belongs to the alpha-IPM synthase/homocitrate synthase family. Homocitrate synthase LYS20/LYS21 subfamily. The cofactor is Mg(2+). It depends on Mn(2+) as a cofactor.

It catalyses the reaction acetyl-CoA + 2-oxoglutarate + H2O = (2R)-homocitrate + CoA + H(+). Its pathway is amino-acid biosynthesis; L-lysine biosynthesis via AAA pathway; L-alpha-aminoadipate from 2-oxoglutarate: step 1/5. Its activity is regulated as follows. Inhibited by lysine. Its function is as follows. Catalyzes the aldol-type condensation of 2-oxoglutarate with acetyl-CoA to yield homocitrate. Carries out the first step of the alpha-aminoadipate (AAA) lysine biosynthesis pathway. Does not display 2-isopropylmalate synthase and citramalate synthase activities since it cannot use 2-oxoisovalerate or pyruvate as substrate. The sequence is that of Homocitrate synthase from Sulfolobus acidocaldarius (strain ATCC 33909 / DSM 639 / JCM 8929 / NBRC 15157 / NCIMB 11770).